The sequence spans 314 residues: ATP synthase gamma chain (314 aa).

It belongs to the ATPase gamma chain family. In terms of assembly, F-type ATPases have 2 components, CF(1) - the catalytic core - and CF(0) - the membrane proton channel. CF(1) has five subunits: alpha(3), beta(3), gamma(1), delta(1), epsilon(1). CF(0) has three main subunits: a, b and c.

The protein localises to the cellular thylakoid membrane. Functionally, produces ATP from ADP in the presence of a proton gradient across the membrane. The gamma chain is believed to be important in regulating ATPase activity and the flow of protons through the CF(0) complex. In Crocosphaera subtropica (strain ATCC 51142 / BH68) (Cyanothece sp. (strain ATCC 51142)), this protein is ATP synthase gamma chain.